The chain runs to 278 residues: Small ribosomal subunit protein uS3 (278 aa).

In terms of domain architecture, KH type-2 spans 39 to 107 (LRKAISKKYV…KVQLNIVEIS (69 aa)). The segment at 255–278 (AEIPAEEKPKRVVKKAENITKEEE) is disordered.

The protein belongs to the universal ribosomal protein uS3 family. Part of the 30S ribosomal subunit. Forms a tight complex with proteins S10 and S14.

In terms of biological role, binds the lower part of the 30S subunit head. Binds mRNA in the 70S ribosome, positioning it for translation. The polypeptide is Small ribosomal subunit protein uS3 (Dehalococcoides mccartyi (strain ATCC BAA-2100 / JCM 16839 / KCTC 5957 / BAV1)).